Consider the following 85-residue polypeptide: Cell division protein ZapA (85 aa).

The stretch at 59-85 forms a coiled coil; it reads TAVNVVHDYMKLQEKYEILERQLKEKE.

This sequence belongs to the ZapA family. Type 2 subfamily. In terms of assembly, homodimer. Interacts with FtsZ.

It localises to the cytoplasm. Functionally, activator of cell division through the inhibition of FtsZ GTPase activity, therefore promoting FtsZ assembly into bundles of protofilaments necessary for the formation of the division Z ring. It is recruited early at mid-cell but it is not essential for cell division. The protein is Cell division protein ZapA of Bacillus velezensis (strain DSM 23117 / BGSC 10A6 / LMG 26770 / FZB42) (Bacillus amyloliquefaciens subsp. plantarum).